Consider the following 312-residue polypeptide: Ribosomal protein L11 methyltransferase (312 aa).

T160, G181, D203, and N246 together coordinate S-adenosyl-L-methionine.

Belongs to the methyltransferase superfamily. PrmA family.

It is found in the cytoplasm. It carries out the reaction L-lysyl-[protein] + 3 S-adenosyl-L-methionine = N(6),N(6),N(6)-trimethyl-L-lysyl-[protein] + 3 S-adenosyl-L-homocysteine + 3 H(+). Functionally, methylates ribosomal protein L11. The protein is Ribosomal protein L11 methyltransferase of Staphylococcus aureus (strain MRSA252).